A 199-amino-acid polypeptide reads, in one-letter code: Probable cobalt-precorrin-6B C(15)-methyltransferase (decarboxylating) (199 aa).

S-adenosyl-L-methionine is bound by residues threonine 24, 48–52 (GCGTG), aspartate 72, and alanine 101.

It belongs to the methyltransferase superfamily. Archaeal-type CbiT family.

The enzyme catalyses Co-precorrin-6B + S-adenosyl-L-methionine = Co-precorrin-7 + S-adenosyl-L-homocysteine + CO2. Its pathway is cofactor biosynthesis; adenosylcobalamin biosynthesis; cob(II)yrinate a,c-diamide from sirohydrochlorin (anaerobic route): step 8/10. Functionally, catalyzes the methylation of C-15 in cobalt-precorrin-6B followed by the decarboxylation of C-12 to form cobalt-precorrin-7. This chain is Probable cobalt-precorrin-6B C(15)-methyltransferase (decarboxylating), found in Saccharolobus solfataricus (strain ATCC 35092 / DSM 1617 / JCM 11322 / P2) (Sulfolobus solfataricus).